The sequence spans 442 residues: Na(+)/H(+) antiporter NhaA (442 aa).

The next 11 membrane-spanning stretches (helical) occupy residues 32–52 (IGGG…NSPW), 73–93 (LTLA…VAGL), 111–131 (AVPV…YALV), 139–159 (AGWA…LAVI), 170–190 (FLLT…AVVY), 193–213 (HLSI…TLLV), 234–254 (VHAS…AVPV), 284–304 (VAVP…LSGL), 316–336 (VVLG…FLVA), 352–372 (VLGL…IGEL), and 383–403 (HVKI…AVVL). Residues 423 to 435 (HDGIPDVYQDLHR) are compositionally biased toward basic and acidic residues. The interval 423–442 (HDGIPDVYQDLHRSSPRPWG) is disordered.

It belongs to the NhaA Na(+)/H(+) (TC 2.A.33) antiporter family.

The protein resides in the cell membrane. The enzyme catalyses Na(+)(in) + 2 H(+)(out) = Na(+)(out) + 2 H(+)(in). Functionally, na(+)/H(+) antiporter that extrudes sodium in exchange for external protons. The polypeptide is Na(+)/H(+) antiporter NhaA (Frankia casuarinae (strain DSM 45818 / CECT 9043 / HFP020203 / CcI3)).